The sequence spans 399 residues: Enoyl-[acyl-carrier-protein] reductase [NADH] (399 aa).

NAD(+)-binding positions include glycine 49–tyrosine 54, phenylalanine 75–glutamate 76, aspartate 112–alanine 113, and leucine 141–alanine 142. A substrate-binding site is contributed by tyrosine 227. Residue tyrosine 237 is the Proton donor of the active site. Residues lysine 246 and valine 272–threonine 274 contribute to the NAD(+) site.

This sequence belongs to the TER reductase family. As to quaternary structure, monomer.

The enzyme catalyses a 2,3-saturated acyl-[ACP] + NAD(+) = a (2E)-enoyl-[ACP] + NADH + H(+). It participates in lipid metabolism; fatty acid biosynthesis. Its function is as follows. Involved in the final reduction of the elongation cycle of fatty acid synthesis (FAS II). Catalyzes the reduction of a carbon-carbon double bond in an enoyl moiety that is covalently linked to an acyl carrier protein (ACP). In Pseudomonas putida (strain W619), this protein is Enoyl-[acyl-carrier-protein] reductase [NADH].